A 429-amino-acid polypeptide reads, in one-letter code: 3-phosphoshikimate 1-carboxyvinyltransferase (429 aa).

3-phosphoshikimate is bound by residues K20, S21, and R25. Position 20 (K20) interacts with phosphoenolpyruvate. Positions 89 and 118 each coordinate phosphoenolpyruvate. Residues S164, S165, Q166, S192, D311, and K338 each contribute to the 3-phosphoshikimate site. A phosphoenolpyruvate-binding site is contributed by Q166. Residue D311 is the Proton acceptor of the active site. The phosphoenolpyruvate site is built by R342 and R384.

It belongs to the EPSP synthase family. Monomer.

The protein localises to the cytoplasm. The catalysed reaction is 3-phosphoshikimate + phosphoenolpyruvate = 5-O-(1-carboxyvinyl)-3-phosphoshikimate + phosphate. It participates in metabolic intermediate biosynthesis; chorismate biosynthesis. In terms of biological role, catalyzes the transfer of the enolpyruvyl moiety of phosphoenolpyruvate (PEP) to the 5-hydroxyl of shikimate-3-phosphate (S3P) to produce enolpyruvyl shikimate-3-phosphate and inorganic phosphate. The polypeptide is 3-phosphoshikimate 1-carboxyvinyltransferase (Methanococcus maripaludis (strain C5 / ATCC BAA-1333)).